The following is a 172-amino-acid chain: MSDSYDDFSLEKSKSQVKRELHALQDLGERLTTLKADLLAKLPLTDALRRALAEAPKHTANAARKRHIQFIGKLMREQDIEAILALIDQVDSSTREYNERFHALERWRDRLIGEGDSALEGFVELYPDADRQHLRGLIRHAQHEAAHNKPPAAARKVFKYIRELDEIQRGLR.

It belongs to the DarP family.

The protein resides in the cytoplasm. Functionally, member of a network of 50S ribosomal subunit biogenesis factors which assembles along the 30S-50S interface, preventing incorrect 23S rRNA structures from forming. Promotes peptidyl transferase center (PTC) maturation. In Ectopseudomonas mendocina (strain ymp) (Pseudomonas mendocina), this protein is Dual-action ribosomal maturation protein DarP.